The sequence spans 602 residues: Elongation factor 4 (602 aa).

In terms of domain architecture, tr-type G spans 7-189; the sequence is KHIRNFSIVA…AIVDKIPSPQ (183 aa). Residues 19 to 24 and 136 to 139 contribute to the GTP site; these read DHGKST and NKID.

This sequence belongs to the TRAFAC class translation factor GTPase superfamily. Classic translation factor GTPase family. LepA subfamily.

It localises to the cell membrane. The enzyme catalyses GTP + H2O = GDP + phosphate + H(+). Required for accurate and efficient protein synthesis under certain stress conditions. May act as a fidelity factor of the translation reaction, by catalyzing a one-codon backward translocation of tRNAs on improperly translocated ribosomes. Back-translocation proceeds from a post-translocation (POST) complex to a pre-translocation (PRE) complex, thus giving elongation factor G a second chance to translocate the tRNAs correctly. Binds to ribosomes in a GTP-dependent manner. The polypeptide is Elongation factor 4 (Clostridium kluyveri (strain ATCC 8527 / DSM 555 / NBRC 12016 / NCIMB 10680 / K1)).